The primary structure comprises 129 residues: Large ribosomal subunit protein bL12c (129 aa).

It belongs to the bacterial ribosomal protein bL12 family. As to quaternary structure, homodimer. Part of the ribosomal stalk of the 50S ribosomal subunit. Forms a multimeric L10(L12)X complex, where L10 forms an elongated spine to which 2 to 4 L12 dimers bind in a sequential fashion. Binds GTP-bound translation factors.

The protein resides in the plastid. The protein localises to the chloroplast. In terms of biological role, forms part of the ribosomal stalk which helps the ribosome interact with GTP-bound translation factors. Is thus essential for accurate translation. The protein is Large ribosomal subunit protein bL12c of Pyropia yezoensis (Susabi-nori).